The chain runs to 240 residues: 2,3,4,5-tetrahydropyridine-2,6-dicarboxylate N-acetyltransferase (240 aa).

It belongs to the transferase hexapeptide repeat family. DapH subfamily.

It carries out the reaction (S)-2,3,4,5-tetrahydrodipicolinate + acetyl-CoA + H2O = L-2-acetamido-6-oxoheptanedioate + CoA. It functions in the pathway amino-acid biosynthesis; L-lysine biosynthesis via DAP pathway; LL-2,6-diaminopimelate from (S)-tetrahydrodipicolinate (acetylase route): step 1/3. Its function is as follows. Catalyzes the transfer of an acetyl group from acetyl-CoA to tetrahydrodipicolinate. The chain is 2,3,4,5-tetrahydropyridine-2,6-dicarboxylate N-acetyltransferase from Bacillus anthracis (strain A0248).